Here is a 238-residue protein sequence, read N- to C-terminus: Ribonuclease PH (238 aa).

Residues Arg86 and Gly124–Arg126 contribute to the phosphate site.

Belongs to the RNase PH family. In terms of assembly, homohexameric ring arranged as a trimer of dimers.

It carries out the reaction tRNA(n+1) + phosphate = tRNA(n) + a ribonucleoside 5'-diphosphate. Its function is as follows. Phosphorolytic 3'-5' exoribonuclease that plays an important role in tRNA 3'-end maturation. Removes nucleotide residues following the 3'-CCA terminus of tRNAs; can also add nucleotides to the ends of RNA molecules by using nucleoside diphosphates as substrates, but this may not be physiologically important. Probably plays a role in initiation of 16S rRNA degradation (leading to ribosome degradation) during starvation. The sequence is that of Ribonuclease PH from Phenylobacterium zucineum (strain HLK1).